A 226-amino-acid chain; its full sequence is Ribonuclease 3 (226 aa).

An RNase III domain is found at Ile6–Asp128. Glu41 provides a ligand contact to Mg(2+). Residue Asp45 is part of the active site. Asp114 and Glu117 together coordinate Mg(2+). Residue Glu117 is part of the active site. Positions Asp155–Leu225 constitute a DRBM domain.

This sequence belongs to the ribonuclease III family. Homodimer. Mg(2+) is required as a cofactor.

It localises to the cytoplasm. It catalyses the reaction Endonucleolytic cleavage to 5'-phosphomonoester.. Functionally, digests double-stranded RNA. Involved in the processing of primary rRNA transcript to yield the immediate precursors to the large and small rRNAs (23S and 16S). Processes some mRNAs, and tRNAs when they are encoded in the rRNA operon. Processes pre-crRNA and tracrRNA of type II CRISPR loci if present in the organism. The sequence is that of Ribonuclease 3 from Escherichia coli O139:H28 (strain E24377A / ETEC).